Consider the following 68-residue polypeptide: Large ribosomal subunit protein uL29 (68 aa).

This sequence belongs to the universal ribosomal protein uL29 family.

This chain is Large ribosomal subunit protein uL29, found in Persephonella marina (strain DSM 14350 / EX-H1).